The chain runs to 465 residues: 2-methylcitrate synthase, mitochondrial (465 aa).

Residues 1 to 29 constitute a mitochondrion transit peptide; it reads MAMTMRSTRHASKLAQTARLALTNSRRYS. 2 residues coordinate CoA: Arg74 and Lys192. Oxaloacetate is bound at residue His269. Leu304 is a CoA binding site. His305 is an active-site residue. The CoA site is built by Val346, Gly348, and Tyr349. The oxaloacetate site is built by His351 and Arg360. Residue His351 is part of the active site. Thr400, Lys401, and Asn406 together coordinate CoA. Asp408 is an active-site residue. Oxaloacetate contacts are provided by Arg434 and Arg454.

The protein belongs to the citrate synthase family. Homodimer.

The protein localises to the mitochondrion matrix. The enzyme catalyses propanoyl-CoA + oxaloacetate + H2O = (2S,3S)-2-methylcitrate + CoA + H(+). The catalysed reaction is oxaloacetate + acetyl-CoA + H2O = citrate + CoA + H(+). It participates in organic acid metabolism; propanoate degradation. Its function is as follows. Component of the methylcitrate cycle that catalyzes the synthesis of (2S,3S)-2-methylcitrate from propionyl-CoA and oxaloacetate. Plays an important role in detoxification of propionyl-CoA, an inhibitor of both primary and secondary metabolism. Also has citrate synthase activity using as substrates acetyl-CoA and oxaloacetate. Plays a key role in the estabishment of invasive pulmonary aspergillosis. In Aspergillus fumigatus (strain CBS 144.89 / FGSC A1163 / CEA10) (Neosartorya fumigata), this protein is 2-methylcitrate synthase, mitochondrial.